The chain runs to 272 residues: 5'-nucleotidase SurE (272 aa).

4 residues coordinate a divalent metal cation: D8, D9, S39, and N96.

It belongs to the SurE nucleotidase family. It depends on a divalent metal cation as a cofactor.

The protein resides in the cytoplasm. The enzyme catalyses a ribonucleoside 5'-phosphate + H2O = a ribonucleoside + phosphate. In terms of biological role, nucleotidase that shows phosphatase activity on nucleoside 5'-monophosphates. The protein is 5'-nucleotidase SurE of Heliobacterium modesticaldum (strain ATCC 51547 / Ice1).